A 423-amino-acid polypeptide reads, in one-letter code: Pre-mRNA polyadenylation factor fip-1 (423 aa).

Acidic residues predominate over residues 1–11 (MDIDEDEDFYA). Disordered stretches follow at residues 1-178 (MDID…PVRT), 278-307 (GPGG…GGPG), and 360-423 (PGGG…GRRW). The span at 19–61 (PPTTAATTTTPATTTTTAAPTTTTTTTSTTTASAPPTTTSSST) shows a compositional bias: low complexity. Residues 65-90 (DELEEGEEEDEGGGAMDEDDDSDIDI) are compositionally biased toward acidic residues. Residues 135–146 (GTNSNSNSSSNK) show a composition bias toward low complexity. Positions 360 to 415 (PGGGPGGPGTGGMGPGGPGGQGGQGQQFGGGFGGNQGQGGYGGYDQMGGAGGGGRG) are enriched in gly residues.

Belongs to the FIP1 family.

The protein localises to the nucleus. Functionally, pre-mRNA polyadenylation factor that directly interacts with poly(A) polymerase. This chain is Pre-mRNA polyadenylation factor fip-1 (fip-1), found in Neurospora crassa (strain ATCC 24698 / 74-OR23-1A / CBS 708.71 / DSM 1257 / FGSC 987).